Consider the following 489-residue polypeptide: MVSETKTTEAPGLRRELKARHLTMIAIGGSIGTGLFVASGATISQAGPGGALLSYMLIGLMVYFLMTSLGELAAYMPVSGSFATYGQNYVEEGFGFALGWNYWYNWAVTIAVDLVAAQLVMSWWFPDTPGWIWSALFLGVIFLLNYISVRGFGEAEYWFSLIKVTTVIVFIIVGVLMIIGIFKGAQPAGWSNWTIGEAPFAGGFAAMIGVAMIVGFSFQGTELIGIAAGESEDPAKNIPRAVRQVFWRILLFYVFAILIISLIIPYTDPSLLRNDVKDISVSPFTLVFQHAGLLSAAAVMNAVILTAVLSAGNSGMYASTRMLYTLACDGKAPRIFAKLSRGGVPRNALYATTVIAGLCFLTSMFGNQTVYLWLLNTSGMTGFIAWLGIAISHYRFRRGYVLQGHDINDLPYRSGFFPLGPIFAFILCLIITLGQNYEAFLKDTIDWGGVAATYIGIPLFLIIWFGYKLIKGTHFVRYSEMKFPQNDKK.

Over V2–L22 the chain is Cytoplasmic. A helical transmembrane segment spans residues T23–I43. Over S44–Q45 the chain is Periplasmic. Residues A46–M66 form a helical membrane-spanning segment. At T67–N105 the chain is on the cytoplasmic side. Residues W106 to P126 form a helical membrane-spanning segment. Topologically, residues D127–T128 are periplasmic. The helical transmembrane segment at P129–V149 threads the bilayer. Over R150–L161 the chain is Cytoplasmic. A helical transmembrane segment spans residues I162 to F182. Over K183 to E197 the chain is Periplasmic. Residues A198–F218 form a helical membrane-spanning segment. The Cytoplasmic portion of the chain corresponds to Q219–Q244. The chain crosses the membrane as a helical span at residues V245–P265. Over Y266–H290 the chain is Periplasmic. A helical transmembrane segment spans residues A291–A311. Topologically, residues G312–R346 are cytoplasmic. A helical transmembrane segment spans residues N347–N367. Residues Q368–V370 lie on the Periplasmic side of the membrane. The chain crosses the membrane as a helical span at residues Y371–I391. Residues S392–R413 are Cytoplasmic-facing. A helical transmembrane segment spans residues S414–G434. The Periplasmic portion of the chain corresponds to Q435–D446. A helical membrane pass occupies residues W447 to Y467. Residues K468 to K489 lie on the Cytoplasmic side of the membrane.

This sequence belongs to the amino acid-polyamine-organocation (APC) superfamily. Amino acid transporter (AAT) (TC 2.A.3.1) family. In terms of assembly, interacts strongly with the transcriptional activator CadC in the absence of lysine or at low lysine concentrations. Interaction is markedly attenuated under increasing lysine levels. Concomitant pH-dependent protonation of periplasmic amino acids in both proteins dissolves their electrostatic connections resulting in further destabilization of the CadC/LysP interaction. Low pH promotes oligomerization of LysP.

The protein localises to the cell inner membrane. It catalyses the reaction L-lysine(out) + H(+)(out) = L-lysine(in) + H(+)(in). Functionally, permease involved in lysine uptake. In addition, functions as a lysine sensor that mediates the lysine-dependent regulation of the transcriptional activator CadC. In the absence of lysine, or at low lysine concentrations, LysP inhibits CadC by an interaction with the transmembrane domain of CadC. In the presence of lysine, LysP loses its ability to interact with and inhibit CadC, and acts as a lysine permease. The protein is Lysine-specific permease LysP of Escherichia coli (strain K12).